Reading from the N-terminus, the 558-residue chain is Aspartate--tRNA ligase 2, cytoplasmic (558 aa).

Positions 1-18 (MSSESEIPPLSSSTAAAE) are enriched in low complexity. The segment at 1-57 (MSSESEIPPLSSSTAAAEESGEKTSKKAAKKEAAKLEKLRRRQEQEEATRRTASISL) is disordered. S2 carries the N-acetylserine modification. Over residues 20–50 (SGEKTSKKAAKKEAAKLEKLRRRQEQEEATR) the composition is skewed to basic and acidic residues. Positions 110-195 (VLIRGRVHTN…QVEIQVRKVY (86 aa)) form a DNA-binding region, OB. Position 286 (E286) interacts with L-aspartate. Residues 308–311 (QLHK) are aspartate. R330 contributes to the L-aspartate binding site. ATP is bound by residues 330-332 (RAE), 338-340 (RHL), and E481. The Mg(2+) site is built by E481 and S484. Residues S484 and R488 each coordinate L-aspartate. 529 to 532 (GLER) lines the ATP pocket.

It belongs to the class-II aminoacyl-tRNA synthetase family. Type 2 subfamily.

It localises to the cytoplasm. It is found in the cytosol. The protein localises to the endoplasmic reticulum. It carries out the reaction tRNA(Asp) + L-aspartate + ATP = L-aspartyl-tRNA(Asp) + AMP + diphosphate. In terms of biological role, catalyzes the specific attachment of an amino acid to its cognate tRNA in a 2 step reaction: the amino acid (AA) is first activated by ATP to form AA-AMP and then transferred to the acceptor end of the tRNA. Involved in the perception of beta-aminobutyric acid (BABA) and required for BABA priming effect in disease resistance. This chain is Aspartate--tRNA ligase 2, cytoplasmic, found in Arabidopsis thaliana (Mouse-ear cress).